Reading from the N-terminus, the 89-residue chain is Small ribosomal subunit protein uS19 (89 aa).

The protein belongs to the universal ribosomal protein uS19 family.

Protein S19 forms a complex with S13 that binds strongly to the 16S ribosomal RNA. The polypeptide is Small ribosomal subunit protein uS19 (Phocaeicola vulgatus (strain ATCC 8482 / DSM 1447 / JCM 5826 / CCUG 4940 / NBRC 14291 / NCTC 11154) (Bacteroides vulgatus)).